A 343-amino-acid chain; its full sequence is CMP-N-acetylneuraminate-beta-galactosamide-alpha-2,3-sialyltransferase 1 (343 aa).

Residues 1–11 lie on the Cytoplasmic side of the membrane; sequence MAPMRKKSTLK. A helical; Signal-anchor for type II membrane protein transmembrane segment spans residues 12–27; the sequence is LLTLLVLFIFLTSFFL. Asn-28 carries N-linked (GlcNAc...) asparagine glycosylation. Over 28–343 the chain is Lumenal; it reads NYSHTVVTTA…INKIRIFKGR (316 aa). Cystine bridges form between Cys-62-Cys-67, Cys-64-Cys-142, and Cys-145-Cys-284. A glycan (N-linked (GlcNAc...) asparagine) is linked at Asn-82. Gln-108 is a substrate binding site. Asn-117 is a glycosylation site (N-linked (GlcNAc...) asparagine). Asn-150, Asn-173, Tyr-233, Tyr-269, Gly-273, Gly-293, His-302, and His-319 together coordinate substrate. N-linked (GlcNAc...) asparagine glycosylation occurs at Asn-326.

Belongs to the glycosyltransferase 29 family. In terms of processing, the soluble form derives from the membrane form by proteolytic processing. The long isoform is abundant in salivary gland, liver, lung, and colon mucosa. Both long and short forms are detected in submaxillary salivary glands.

Its subcellular location is the golgi apparatus. The protein resides in the golgi stack membrane. It localises to the trans-Golgi network membrane. The protein localises to the secreted. The enzyme catalyses a beta-D-galactosyl-(1-&gt;3)-N-acetyl-alpha-D-galactosaminyl derivative + CMP-N-acetyl-beta-neuraminate = an N-acetyl-alpha-neuraminyl-(2-&gt;3)-beta-D-galactosyl-(1-&gt;3)-N-acetyl-alpha-D-galactosaminyl derivative + CMP + H(+). It carries out the reaction a ganglioside GM1 (d18:1(4E)) + CMP-N-acetyl-beta-neuraminate = a ganglioside GD1a (d18:1(4E)) + CMP + H(+). It catalyses the reaction ganglioside GM1 (d18:1(4E)/18:0) + CMP-N-acetyl-beta-neuraminate = ganglioside GD1a (18:1(4E)/18:0) + CMP + H(+). The catalysed reaction is a ganglioside GA1 (d18:1(4E)) + CMP-N-acetyl-beta-neuraminate = a ganglioside GM1b (d18:1(4E)) + CMP + H(+). The enzyme catalyses a ganglioside GD1b + CMP-N-acetyl-beta-neuraminate = a ganglioside GT1b + CMP + H(+). It carries out the reaction a 3-O-[beta-D-galactosyl-(1-&gt;3)-N-acetyl-alpha-D-galactosaminyl]-L-threonyl-[protein] + CMP-N-acetyl-beta-neuraminate = a 3-O-[N-acetyl-alpha-neuraminyl-(2-&gt;3)-beta-D-galactosyl-(1-&gt;3)-N-acetyl-alpha-D-galactosaminyl]-L-threonyl-[protein] + CMP + H(+). It catalyses the reaction a 3-O-[beta-D-galactosyl-(1-&gt;3)-N-acetyl-alpha-D-galactosaminyl]-L-seryl-[protein] + CMP-N-acetyl-beta-neuraminate = 3-O-[N-acetyl-alpha-neuraminyl-(2-&gt;3)-beta-D-galactosyl-(1-&gt;3)-N-acetyl-alpha-D-galactosaminyl]-L-seryl-[protein] + CMP + H(+). The protein operates within protein modification; protein glycosylation. It functions in the pathway glycolipid biosynthesis. Functionally, a beta-galactoside alpha2-&gt;3 sialyltransferase involved in terminal sialylation of glycoproteins and glycolipids. Catalyzes the transfer of sialic acid (N-acetyl-neuraminic acid; Neu5Ac) from the nucleotide sugar donor CMP-Neu5Ac onto acceptor Galbeta-(1-&gt;3)-GalNAc-terminated glycoconjugates through an alpha2-3 linkage. Adds sialic acid to the core 1 O-glycan, Galbeta-(1-&gt;3)-GalNAc-O-Ser/Thr, which is a major structure of mucin-type O-glycans. As part of a homeostatic mechanism that regulates CD8-positive T cell numbers, sialylates core 1 O-glycans of T cell glycoproteins, SPN/CD43 and PTPRC/CD45. Prevents premature apoptosis of thymic CD8-positive T cells prior to peripheral emigration, whereas in the secondary lymphoid organs controls the survival of CD8-positive memory T cells generated following a successful immune response. Transfers sialic acid to asialofetuin, presumably onto Galbeta-(1-&gt;3)-GalNAc-O-Ser. Sialylates GM1a, GA1 and GD1b gangliosides to form GD1a, GM1b and GT1b, respectively. The polypeptide is CMP-N-acetylneuraminate-beta-galactosamide-alpha-2,3-sialyltransferase 1 (ST3GAL1) (Sus scrofa (Pig)).